Consider the following 87-residue polypeptide: Small ribosomal subunit protein bS20 (87 aa).

Residues 1 to 12 (MANHKSALKRNR) are compositionally biased toward basic residues. The tract at residues 1–21 (MANHKSALKRNRQAAVRNARN) is disordered.

The protein belongs to the bacterial ribosomal protein bS20 family.

Functionally, binds directly to 16S ribosomal RNA. The protein is Small ribosomal subunit protein bS20 of Syntrophotalea carbinolica (strain DSM 2380 / NBRC 103641 / GraBd1) (Pelobacter carbinolicus).